Here is a 372-residue protein sequence, read N- to C-terminus: NAD(P)H-quinone oxidoreductase subunit 1 (372 aa).

The next 9 membrane-spanning stretches (helical) occupy residues 27–47, 65–85, 97–117, 128–148, 166–186, 204–224, 266–286, 308–328, and 347–367; these read AIWM…GVLV, PEYI…KLVF, WLFT…YLIV, IGTG…GLLM, AAQS…IVMM, ILGW…IAAL, VLSA…PIPI, ALGI…AILL, and FLLP…LAFP.

The protein belongs to the complex I subunit 1 family. NDH-1 is composed of at least 11 different subunits.

The protein resides in the cellular thylakoid membrane. The enzyme catalyses a plastoquinone + NADH + (n+1) H(+)(in) = a plastoquinol + NAD(+) + n H(+)(out). The catalysed reaction is a plastoquinone + NADPH + (n+1) H(+)(in) = a plastoquinol + NADP(+) + n H(+)(out). Its function is as follows. NDH-1 shuttles electrons from an unknown electron donor, via FMN and iron-sulfur (Fe-S) centers, to quinones in the respiratory and/or the photosynthetic chain. The immediate electron acceptor for the enzyme in this species is believed to be plastoquinone. Couples the redox reaction to proton translocation, and thus conserves the redox energy in a proton gradient. The protein is NAD(P)H-quinone oxidoreductase subunit 1 of Trichormus variabilis (strain ATCC 29413 / PCC 7937) (Anabaena variabilis).